The following is a 214-amino-acid chain: Adenylate kinase (214 aa).

Glycine 10–threonine 15 is a binding site for ATP. The segment at serine 30 to valine 59 is NMP. AMP contacts are provided by residues threonine 31, arginine 36, glutamate 57–valine 59, glycine 85–arginine 88, and glutamine 92. The tract at residues glycine 126–aspartate 163 is LID. ATP is bound at residue arginine 127. Zn(2+) contacts are provided by cysteine 130 and cysteine 133. Threonine 136 to tyrosine 137 contacts ATP. Zn(2+) contacts are provided by cysteine 150 and cysteine 153. Positions 160 and 171 each coordinate AMP. Residue glycine 199 participates in ATP binding.

It belongs to the adenylate kinase family. As to quaternary structure, monomer.

It is found in the cytoplasm. The catalysed reaction is AMP + ATP = 2 ADP. It participates in purine metabolism; AMP biosynthesis via salvage pathway; AMP from ADP: step 1/1. Its function is as follows. Catalyzes the reversible transfer of the terminal phosphate group between ATP and AMP. Plays an important role in cellular energy homeostasis and in adenine nucleotide metabolism. This is Adenylate kinase from Ruminiclostridium cellulolyticum (strain ATCC 35319 / DSM 5812 / JCM 6584 / H10) (Clostridium cellulolyticum).